Reading from the N-terminus, the 248-residue chain is Cutinase cut1 (248 aa).

The first 17 residues, 1 to 17 (MRSLSLFTALLAGQAFA), serve as a signal peptide directing secretion. Cysteine 79 and cysteine 153 are joined by a disulfide. The active-site Nucleophile is the serine 164. A disulfide bridge connects residues cysteine 212 and cysteine 219. Residue aspartate 216 is part of the active site. The active-site Proton donor/acceptor is the histidine 229.

The protein belongs to the cutinase family. The 2 disulfide bonds play a critical role in holding the catalytic residues in juxta-position; reduction of the disulfide bridges results in the complete inactivation of the enzyme.

It is found in the secreted. It carries out the reaction cutin + H2O = cutin monomers.. In terms of biological role, catalyzes the hydrolysis of complex carboxylic polyesters found in the cell wall of plants. May degrade cutin, a macromolecule that forms the structure of the plant cuticle. May also degrade suberin, a specialized macromolecule found in the cell wall of various plant tissues. This Trichoderma harzianum (Hypocrea lixii) protein is Cutinase cut1.